Reading from the N-terminus, the 247-residue chain is Chymase (247 aa).

An N-terminal signal peptide occupies residues M1 to A19. A propeptide spans G20–E21 (activation peptide). In terms of domain architecture, Peptidase S1 spans I22–Q245. A disulfide bridge connects residues C51 and C67. H66 serves as the catalytic Charge relay system. N-linked (GlcNAc...) asparagine glycans are attached at residues N80 and N103. Residue D110 is the Charge relay system of the active site. Disulfide bonds link C144/C209 and C175/C188. The active-site Charge relay system is S203.

Belongs to the peptidase S1 family. Granzyme subfamily.

It localises to the secreted. Its subcellular location is the cytoplasmic granule. It carries out the reaction Preferential cleavage: Phe-|-Xaa &gt; Tyr-|-Xaa &gt; Trp-|-Xaa &gt; Leu-|-Xaa.. Functionally, major secreted protease of mast cells with suspected roles in vasoactive peptide generation, extracellular matrix degradation, and regulation of gland secretion. In Macaca fascicularis (Crab-eating macaque), this protein is Chymase (CMA1).